A 169-amino-acid polypeptide reads, in one-letter code: Transcription antitermination protein NusB (169 aa).

The segment at 1–20 (MAESSNKPFRGPVRANDRKA) is disordered.

The protein belongs to the NusB family.

Its function is as follows. Involved in transcription antitermination. Required for transcription of ribosomal RNA (rRNA) genes. Binds specifically to the boxA antiterminator sequence of the ribosomal RNA (rrn) operons. The sequence is that of Transcription antitermination protein NusB from Bradyrhizobium sp. (strain BTAi1 / ATCC BAA-1182).